We begin with the raw amino-acid sequence, 299 residues long: Probable lipid kinase YegS (299 aa).

The DAGKc domain maps to 2 to 133; that stretch reads ADLPASLLIL…IDIAQVNKET (132 aa). ATP contacts are provided by residues T40, 66–72, and T95; that span reads GDGTINE. 3 residues coordinate Mg(2+): L215, D218, and L220. E271 functions as the Proton acceptor in the catalytic mechanism.

Belongs to the diacylglycerol/lipid kinase family. YegS lipid kinase subfamily. Mg(2+) is required as a cofactor. It depends on Ca(2+) as a cofactor.

It is found in the cytoplasm. In terms of biological role, probably phosphorylates lipids; the in vivo substrate is unknown. This is Probable lipid kinase YegS from Escherichia fergusonii (strain ATCC 35469 / DSM 13698 / CCUG 18766 / IAM 14443 / JCM 21226 / LMG 7866 / NBRC 102419 / NCTC 12128 / CDC 0568-73).